Reading from the N-terminus, the 33-residue chain is Beta-amanitin proprotein (33 aa).

The propeptide occupies 1 to 10; that stretch reads MSDINATRLP. The cyclopeptide (Ile-Pro) cross-link spans 11–18; sequence IWGIGCDP. Positions 12–16 form a cross-link, 2'-cysteinyl-6'-hydroxytryptophan sulfoxide (Trp-Cys); sequence WGIGC. Residues 19–33 constitute a propeptide that is removed on maturation; sequence CVGDDVTAVLTRGEA.

The protein belongs to the MSDIN fungal toxin family. Post-translationally, processed by the macrocyclase-peptidase enzyme POPB to yield a toxic cyclic decapeptide. POPB first removes 10 residues from the N-terminus. Conformational trapping of the remaining peptide forces the enzyme to release this intermediate rather than proceed to macrocyclization. The enzyme rebinds the remaining peptide in a different conformation and catalyzes macrocyclization of the N-terminal 8 residues.

In terms of biological role, toxin belonging to the bicyclic octapeptides amatoxins that acts by binding non-competitively to RNA polymerase II and greatly slowing the elongation of transcripts from target promoters. In Amanita pallidorosea, this protein is Beta-amanitin proprotein.